The following is a 152-amino-acid chain: Xanthine-guanine phosphoribosyltransferase (152 aa).

Residues 37-38 (RG), R69, and 88-96 (DDLVDTGGT) contribute to the 5-phospho-alpha-D-ribose 1-diphosphate site. R69 serves as a coordination point for GMP. D89 serves as a coordination point for Mg(2+). Positions 92 and 135 each coordinate guanine. Xanthine contacts are provided by D92 and I135. Residues 92–96 (DTGGT) and 134–135 (WI) each bind GMP.

It belongs to the purine/pyrimidine phosphoribosyltransferase family. XGPT subfamily. Homotetramer. The cofactor is Mg(2+).

The protein resides in the cell inner membrane. The catalysed reaction is GMP + diphosphate = guanine + 5-phospho-alpha-D-ribose 1-diphosphate. The enzyme catalyses XMP + diphosphate = xanthine + 5-phospho-alpha-D-ribose 1-diphosphate. It catalyses the reaction IMP + diphosphate = hypoxanthine + 5-phospho-alpha-D-ribose 1-diphosphate. Its pathway is purine metabolism; GMP biosynthesis via salvage pathway; GMP from guanine: step 1/1. It functions in the pathway purine metabolism; XMP biosynthesis via salvage pathway; XMP from xanthine: step 1/1. In terms of biological role, purine salvage pathway enzyme that catalyzes the transfer of the ribosyl-5-phosphate group from 5-phospho-alpha-D-ribose 1-diphosphate (PRPP) to the N9 position of the 6-oxopurines guanine and xanthine to form the corresponding ribonucleotides GMP (guanosine 5'-monophosphate) and XMP (xanthosine 5'-monophosphate), with the release of PPi. To a lesser extent, also acts on hypoxanthine. In Shigella boydii serotype 18 (strain CDC 3083-94 / BS512), this protein is Xanthine-guanine phosphoribosyltransferase.